The primary structure comprises 392 residues: Probable tRNA pseudouridine synthase D 1 (392 aa).

The Nucleophile role is filled by aspartate 92. Positions 167-354 constitute a TRUD domain; that stretch reads YFLNYYGVQR…FIGDRRAMIG (188 aa).

The protein belongs to the pseudouridine synthase TruD family.

The catalysed reaction is uridine(13) in tRNA = pseudouridine(13) in tRNA. Its function is as follows. Could be responsible for synthesis of pseudouridine from uracil-13 in transfer RNAs. This chain is Probable tRNA pseudouridine synthase D 1, found in Methanocaldococcus jannaschii (strain ATCC 43067 / DSM 2661 / JAL-1 / JCM 10045 / NBRC 100440) (Methanococcus jannaschii).